The chain runs to 94 residues: Co-chaperonin GroES (94 aa).

Belongs to the GroES chaperonin family. As to quaternary structure, heptamer of 7 subunits arranged in a ring. Interacts with the chaperonin GroEL.

The protein localises to the cytoplasm. Together with the chaperonin GroEL, plays an essential role in assisting protein folding. The GroEL-GroES system forms a nano-cage that allows encapsulation of the non-native substrate proteins and provides a physical environment optimized to promote and accelerate protein folding. GroES binds to the apical surface of the GroEL ring, thereby capping the opening of the GroEL channel. This Staphylococcus aureus (strain Mu50 / ATCC 700699) protein is Co-chaperonin GroES.